The sequence spans 135 residues: Putative pre-16S rRNA nuclease (135 aa).

This sequence belongs to the YqgF nuclease family.

The protein resides in the cytoplasm. In terms of biological role, could be a nuclease involved in processing of the 5'-end of pre-16S rRNA. This chain is Putative pre-16S rRNA nuclease, found in Maridesulfovibrio salexigens (strain ATCC 14822 / DSM 2638 / NCIMB 8403 / VKM B-1763) (Desulfovibrio salexigens).